Here is a 159-residue protein sequence, read N- to C-terminus: RNA pyrophosphohydrolase (159 aa).

One can recognise a Nudix hydrolase domain in the interval 6 to 149; sequence GFRPNVGIIL…KREVYRRALK (144 aa). Residues 38–59 carry the Nudix box motif; it reads GGINDRETPEEALYRELNEEVG.

It belongs to the Nudix hydrolase family. RppH subfamily. Requires a divalent metal cation as cofactor.

In terms of biological role, accelerates the degradation of transcripts by removing pyrophosphate from the 5'-end of triphosphorylated RNA, leading to a more labile monophosphorylated state that can stimulate subsequent ribonuclease cleavage. This Pseudomonas aeruginosa (strain LESB58) protein is RNA pyrophosphohydrolase.